The following is a 276-amino-acid chain: Glutamate racemase (276 aa).

Residues 10 to 11 and 42 to 43 each bind substrate; these read DS and YG. The active-site Proton donor/acceptor is Cys73. Substrate is bound at residue 74 to 75; the sequence is NS. Cys183 functions as the Proton donor/acceptor in the catalytic mechanism. 184–185 contributes to the substrate binding site; that stretch reads TH.

This sequence belongs to the aspartate/glutamate racemases family.

The enzyme catalyses L-glutamate = D-glutamate. It participates in cell wall biogenesis; peptidoglycan biosynthesis. Provides the (R)-glutamate required for cell wall biosynthesis. This chain is Glutamate racemase, found in Parafrankia sp. (strain EAN1pec).